Consider the following 502-residue polypeptide: 4,4'-diaponeurosporene oxygenase (502 aa).

Position 8-20 (8-20) interacts with FAD; it reads IIGGGLGGISAAI.

The protein belongs to the carotenoid/retinoid oxidoreductase family. CrtP subfamily. It depends on FAD as a cofactor.

The catalysed reaction is all-trans-4,4'-diaponeurosporene + 2 AH2 + 2 O2 = 4,4'-diaponeurosporenal + 2 A + 3 H2O. It functions in the pathway carotenoid biosynthesis; staphyloxanthin biosynthesis; staphyloxanthin from farnesyl diphosphate: step 3/5. Its function is as follows. Involved in the biosynthesis of the yellow-orange carotenoid staphyloxanthin, which plays a role in the virulence via its protective function against oxidative stress. Catalyzes the oxidation of the terminal methyl side group of 4,4'-diaponeurosporene to form 4,4'-diaponeurosporen-4-al. In Staphylococcus haemolyticus (strain JCSC1435), this protein is 4,4'-diaponeurosporene oxygenase.